The sequence spans 3460 residues: Reelin (3460 aa).

A signal peptide spans 1 to 25; sequence MERSGWARQTFLLALLLGATLRARA. The region spanning 26–190 is the Reelin domain; the sequence is AAGYYPRFSP…GAPTDVTVHP (165 aa). Residues Cys-40 and Cys-126 are joined by a disulfide bond. Asn-140 carries an N-linked (GlcNAc...) asparagine glycan. Residues Cys-154 and Cys-178 are joined by a disulfide bond. 3 N-linked (GlcNAc...) asparagine glycosylation sites follow: Asn-257, Asn-289, and Asn-305. The cysteines at positions 539 and 580 are disulfide-linked. The stretch at 592 to 603 is one BNR 1 repeat; sequence EFSTNHGRSWSL. Cysteines 608 and 613 form a disulfide. A glycan (N-linked (GlcNAc...) asparagine) is linked at Asn-628. Residues 670–701 form the EGF-like 1 domain; that stretch reads IGPSCLKFCSGRGQCTRHGCKCDPGFSGPACE. 2 cysteine pairs are disulfide-bonded: Cys-674-Cys-684 and Cys-691-Cys-700. One copy of the BNR 2 repeat lies at 798–809; sequence HYSYDNGITWKL. Cys-894 and Cys-936 are disulfide-bonded. The BNR 3 repeat unit spans residues 951–962; the sequence is EYSTNHGLTWHL. 3 cysteine pairs are disulfide-bonded: Cys-967–Cys-974, Cys-1033–Cys-1043, and Cys-1050–Cys-1059. The EGF-like 2 domain maps to 1029–1060; sequence IGQQCPNMCSGHGSCDHGICRCDQGYQGTECH. A BNR 4 repeat occupies 1156–1167; sequence QYSNNGGIQWHL. Asn-1266 carries an N-linked (GlcNAc...) asparagine glycan. A disulfide bond links Cys-1270 and Cys-1309. Residues 1322 to 1333 form a BNR 5 repeat; that stretch reads QYSHDAGMSWFL. Cys-1338 and Cys-1347 form a disulfide bridge. In terms of domain architecture, EGF-like 3 spans 1408 to 1441; it reads ISEPCPSYCSGHGDCISGVCFCDLGYTAAQGTCV. The BNR 6 repeat unit spans residues 1534-1545; sequence QYSNDNGILWHL. An N-linked (GlcNAc...) asparagine glycan is attached at Asn-1599. Residues Cys-1632 and Cys-1672 are joined by a disulfide bond. One copy of the BNR 7 repeat lies at 1685–1696; that stretch reads QYSLNNGKDWHL. Residues Cys-1701 and Cys-1708 are joined by a disulfide bond. An N-linked (GlcNAc...) asparagine glycan is attached at Asn-1749. One can recognise an EGF-like 4 domain in the interval 1764–1795; that stretch reads LASGCPWMCSGRGICDAGRCVCDRGFGGPYCV. Residues 1883 to 1894 form a BNR 8 repeat; it reads QFSISGGITWHL. N-linked (GlcNAc...) asparagine glycosylation occurs at Asn-1920. One copy of the BNR 9 repeat lies at 2042-2053; sequence EFSRDFGATWHL. Positions 2060 and 2073 each coordinate Zn(2+). The region spanning 2128-2160 is the EGF-like 5 domain; sequence IGPQCEEMCNGQGSCINGTKCICDPGYSGPTCK. 3 disulfides stabilise this stretch: Cys-2132/Cys-2142, Cys-2136/Cys-2148, and Cys-2150/Cys-2159. N-linked (GlcNAc...) asparagine glycosylation occurs at Asn-2144. Glu-2178 contacts Zn(2+). The cysteines at positions 2194 and 2234 are disulfide-linked. The BNR 10 repeat unit spans residues 2249 to 2260; it reads QYSLNGGLSWSL. Glu-2263 serves as a coordination point for Zn(2+). N-linked (GlcNAc...) asparagine glycans are attached at residues Asn-2268 and Asn-2316. 3 cysteine pairs are disulfide-bonded: Cys-2347–Cys-2386, Cys-2392–Cys-2558, and Cys-2543–Cys-2583. Residues Glu-2396, Glu-2398, and His-2459 each contribute to the Zn(2+) site. A BNR 11 repeat occupies 2398–2409; it reads EYSVDLGLSWHP. In terms of domain architecture, EGF-like 6 spans 2477–2508; it reads IGDGCIDMCSGHGRCIQGNCVCDEQWGGLYCD. Asn-2568 carries N-linked (GlcNAc...) asparagine glycosylation. BNR repeat units follow at residues 2597-2608 and 2777-2788; these read EYSVNGGITWNL and QYSTDFGVSWNY. Disulfide bonds link Cys-2793–Cys-2800, Cys-2856–Cys-2866, Cys-2860–Cys-2871, Cys-2873–Cys-2882, and Cys-2918–Cys-2965. Residues 2852–2883 form the EGF-like 7 domain; the sequence is LGPGCLDNCRGHGDCLREQCICDPGYSGPNCY. N-linked (GlcNAc...) asparagine glycosylation is present at Asn-2961. A BNR 14 repeat occupies 2978–2989; sequence DYSTDGGITWTL. 2 N-linked (GlcNAc...) asparagine glycosylation sites follow: Asn-3015 and Asn-3072. One copy of the BNR 15 repeat lies at 3142–3154; that stretch reads EYTKDARSDSWQL. Cys-3159 and Cys-3169 are disulfide-bonded. An N-linked (GlcNAc...) asparagine glycan is attached at Asn-3184. The EGF-like 8 domain maps to 3227–3259; sequence IGEACPKLCSGHGYCTTGAICICDESFQGDDCS. Cystine bridges form between Cys-3231–Cys-3241, Cys-3235–Cys-3247, Cys-3249–Cys-3258, and Cys-3295–Cys-3345. Residues 3362–3373 form a BNR 16 repeat; the sequence is QYSVNNGITWHV. N-linked (GlcNAc...) asparagine glycans are attached at residues Asn-3411 and Asn-3438.

Belongs to the reelin family. In terms of assembly, oligomer of disulfide-linked homodimers. Post-translationally, N-glycosylated and to a lesser extent also O-glycosylated. As to expression, abundantly produced during brain ontogenesis by the Cajal-Retzius cells and other pioneer neurons located in the telencephalic marginal zone and by granule cells of the external granular layer of the cerebellum. In adult brain, preferentially expressed in GABAergic interneurons of prefrontal cortices, temporal cortex, hippocampus and glutamatergic granule cells of cerebellum. Expression is reduced to about 50% in patients with schizophrenia. Also expressed in fetal and adult liver.

It localises to the secreted. Its subcellular location is the extracellular space. The protein resides in the extracellular matrix. Extracellular matrix serine protease secreted by pioneer neurons that plays a role in layering of neurons in the cerebral cortex and cerebellum by coordinating cell positioning during neurodevelopment. Regulates microtubule function in neurons and neuronal migration. Binding to the extracellular domains of lipoprotein receptors VLDLR and LRP8/APOER2 induces tyrosine phosphorylation of DAB1 and modulation of TAU phosphorylation. Affects migration of sympathetic preganglionic neurons in the spinal cord, where it seems to act as a barrier to neuronal migration. Enzymatic activity is important for the modulation of cell adhesion. This is Reelin (RELN) from Homo sapiens (Human).